The chain runs to 429 residues: MDVNMAAELSPTNSSSSGELSVSPEPPRETQAFLGKVTVIDYFTFQHKHLKVTNIDDMTETLYVKLPENMTRCDHLPITCEYLLGRGSYGAVYAHADNATVKLYDSVTELYHELMVCDMIQIGKATAEDGQDKALVDYLSACTSCHALFMPQFRCSLQDYGHWHDGSIEPLVRGFQGLKDAVYFLNRHCGLFHSDISPSNILVDFTDTMWGMGRLVLTDYGTASLHDRNKMLDVRLKSSKGRQLYRLYCQREPFSIAKDTYKPLCLLSKCYILRGAGHIPDPSACGPVGAQTALRLDLQSLGYSLLYGIMHLADSTHKIPYPNPDMGFDRSDPLYFLQFAAPKVVLLEVLSQMWNLNLDMGLTSCGESPCVDVTAEHMSQFLQWCRSLKKRFKESYFFNCRPRFEHPHLPGLVAELLADDFFGPDGRRG.

Residues 1 to 27 (MDVNMAAELSPTNSSSSGELSVSPEPP) are disordered. Residues 1–409 (MDVNMAAELS…CRPRFEHPHL (409 aa)) enclose the Protein kinase domain. Positions 14–23 (SSSSGELSVS) are enriched in low complexity. Residues 36 to 40 (KVTVI) are SUMO interaction motif. Residues 110–118 (LYHELMVCD) and Glu-128 each bind ATP. The active-site Proton acceptor is the Asp-195. Residues 344–350 (VVLLEVL) are SUMO interaction motif.

Belongs to the protein kinase superfamily. Ser/Thr protein kinase family. Interacts with host NUP62 and NUP153; this interaction plays a role in nuclear targeting of BGLF4. Interacts with host SUMO1 and SUMO2.

The protein localises to the virion tegument. It localises to the host nucleus. It carries out the reaction L-seryl-[protein] + ATP = O-phospho-L-seryl-[protein] + ADP + H(+). The catalysed reaction is L-threonyl-[protein] + ATP = O-phospho-L-threonyl-[protein] + ADP + H(+). Its function is as follows. Plays many key roles by phosphorylating several proteins including the viral DNA processivity factor BMRF1, EBNA1 or EBNA2. Modifies the host nuclear envelope structure and induces the redistribution of nuclear envelope-associated proteins by phosphorylating host nucleoporins. Subsequently, promotes the nuclear transport of EBV lytic proteins. Required for efficient lytic DNA replication and release of nucleocapsids from the nucleus. Contributes to the compaction of host cell chromatin in cells undergoing lytic replication, presumably by phosphorylating the host condensin complex and host TOP2A. Induces disassembly of the nuclear lamina by phosphorylating with host LMNA. Phosphorylates substrates involved in capsid assembly and DNA packaging. Facilitates the switch from latent to lytic DNA replication by down-regulating EBNA1 replication function. Phosphorylates the viral immediate-early protein BZLF1 and inhibits its sumoylation by interacting with host SUMO1 and SUMO2. Phosphorylates also host SAMHD1 and thereby counteracts its antiviral effect by reducing its dNTP hydrolase activity. This chain is Serine/threonine-protein kinase BGLF4, found in Epstein-Barr virus (strain AG876) (HHV-4).